A 485-amino-acid chain; its full sequence is Alpha-amylase (485 aa).

The N-terminal stretch at 1-18 (MFLTSVLILCSLAALSLG) is a signal peptide. The residue at position 19 (glutamine 19) is a Pyrrolidone carboxylic acid. A disulfide bridge connects residues cysteine 46 and cysteine 102. Ca(2+) is bound by residues asparagine 116, arginine 164, and aspartate 173. The cysteines at positions 152 and 166 are disulfide-linked. Residue arginine 201 coordinates chloride. Catalysis depends on aspartate 203, which acts as the Nucleophile. Histidine 207 contributes to the Ca(2+) binding site. The active-site Proton donor is the glutamate 240. Chloride is bound by residues asparagine 303 and arginine 339. Cysteine 439 and cysteine 451 are disulfide-bonded. N-linked (GlcNAc...) asparagine glycosylation is present at asparagine 448.

The protein belongs to the glycosyl hydrolase 13 family. In terms of assembly, monomer. Ca(2+) is required as a cofactor. Requires chloride as cofactor. As to expression, expressed in larval and adult gut.

The protein resides in the secreted. The catalysed reaction is Endohydrolysis of (1-&gt;4)-alpha-D-glucosidic linkages in polysaccharides containing three or more (1-&gt;4)-alpha-linked D-glucose units.. The protein is Alpha-amylase of Phaedon cochleariae (Mustard beetle).